Consider the following 647-residue polypeptide: Protein arginine N-methyltransferase 7 (647 aa).

SAM-dependent MTase PRMT-type domains are found at residues 12–332 (EREW…FSLW) and 337–647 (GKDK…SEDS). Residues glutamate 140 and glutamate 149 contribute to the active site.

The protein belongs to the class I-like SAM-binding methyltransferase superfamily. Protein arginine N-methyltransferase family. PRMT7 subfamily.

Its function is as follows. Arginine methyltransferase that can both catalyze the formation of omega-N monomethylarginine (MMA) and symmetrical dimethylarginine (sDMA). The protein is Protein arginine N-methyltransferase 7 (prmt-7) of Caenorhabditis elegans.